Here is a 124-residue protein sequence, read N- to C-terminus: Protein archease (124 aa).

Ca(2+) is bound by residues His7, Asp10, Asp123, and Thr124.

It belongs to the archease family.

Functionally, activates the tRNA-splicing ligase complex by facilitating the enzymatic turnover of catalytic subunit RtcB. Acts by promoting the guanylylation of RtcB, a key intermediate step in tRNA ligation. Can also alter the NTP specificity of RtcB such that ATP, dGTP or ITP is used efficiently. May also act as a chaperone or modulator of proteins involved in DNA or RNA processing. The protein is Protein archease of Thermotoga maritima (strain ATCC 43589 / DSM 3109 / JCM 10099 / NBRC 100826 / MSB8).